Consider the following 506-residue polypeptide: Probable cytochrome P450 309a1 (506 aa).

A phosphothreonine mark is found at threonine 75, threonine 78, and threonine 81. Cysteine 452 provides a ligand contact to heme.

Belongs to the cytochrome P450 family. It depends on heme as a cofactor.

Its subcellular location is the endoplasmic reticulum membrane. It is found in the microsome membrane. Functionally, may be involved in the metabolism of insect hormones and in the breakdown of synthetic insecticides. The protein is Probable cytochrome P450 309a1 (Cyp309a1) of Drosophila melanogaster (Fruit fly).